Consider the following 375-residue polypeptide: Putative F-box only protein 11 (375 aa).

In terms of domain architecture, F-box spans 1 to 46 (MVSVNLPWELVEEILCRVPPQSLVKFRTVCKQWNSLFDDNKFVNDH).

In Arabidopsis thaliana (Mouse-ear cress), this protein is Putative F-box only protein 11 (FBX11).